Consider the following 839-residue polypeptide: MTTTTNIINNGVSSFSLNNNSNIPTIHSPSNPIVDCIRDGTMAYIYLVDESYIQQQHQPNPKFPSLIPLPKKLYSTTPNKTTPYPFQFQQNNENLSIVKEIYNYINCFEIKDCRDFHCVDSIKRYARFHLNLTLKFMGCKSIHARQISNTVFEQLEKCRIEQNKQLTATNNNAIVTTDSITKTEQSTTTTTTTTTTTTTTTATTTTQPPIYCVSIQRNIFYYIIGHILSCYQYSKPQYIIDFPVSCEVQDKKHSFTILLGGTSGCGKSTLTALLASRIGFTAVISTDNIRQLLRKFISRQESPILWASTYHAGEIISNPSLSHKEKILQGYEAQNEMIFNKLDILIGHYEKRKESLIVEGVHLDTKLILRLVKKHPSCIPFLMYISNEAKHKERFAIRSKYMTLDPHQNKYTKYFKNIRIINDHLCHGADEHMIPQIDNTSIDRSLATIHGTIFACLKRKVQCGESYYNHETDKMNMLYNQYEQIQHQFWSSKGMLRLIQKKKTVSPHGNNNVTGDVDNNNSNSNNNNVNNNNGDNNGDSNVDNNSNDNDNNNNNSNNISNINNDNDNNNNDNDNSNVDNNNDNSDNSVNSNNSINSNNGNEGSNNCNVVNGNNSNSDILIKVEYNKNNNSSSNDNEYKNSNDNHCNIKNETENSDINGCINNNIISYNNNIKNNTDNTTGNHNYTTMNGNNENDCKNNNNNNNIKTIPNEGQQQPQQQPQQQPPQQSQQQPQLQQKKQQIQEEQQNLNNNNKSIEDDEEAFNSDDEHDHEDDSIRGNESGSVGDHGNSVKKSSLNDKNHNNGNNQSNEDNDDDSDISDSDSDGGERIDYYLDCGSLGS.

Disordered regions lie at residues 504–611 (TVSP…NVVN), 627–646 (KNNN…DNHC), and 682–839 (NHNY…SLGS). Over residues 509–611 (GNNNVTGDVD…EGSNNCNVVN (103 aa)) the composition is skewed to low complexity. A compositionally biased stretch (basic and acidic residues) spans 636-646 (NEYKNSNDNHC). 2 stretches are compositionally biased toward low complexity: residues 689-704 (NGNN…NNNN) and 713-753 (QQQP…NNNK). Positions 726 to 764 (QQSQQQPQLQQKKQQIQEEQQNLNNNNKSIEDDEEAFNS) form a coiled coil. A compositionally biased stretch (basic and acidic residues) spans 765–776 (DDEHDHEDDSIR). Acidic residues predominate over residues 809 to 823 (EDNDDDSDISDSDSD).

This is an uncharacterized protein from Dictyostelium discoideum (Social amoeba).